The following is a 181-amino-acid chain: Resolvase/recombinase (181 aa).

Positions 2-137 (RLFGYARVST…EGRLEAKAKG (136 aa)) constitute a Resolvase/invertase-type recombinase catalytic domain. The active-site O-(5'-phospho-DNA)-serine intermediate is the Ser-10. The segment at residues 161-180 (AMEIAKRLKIGRSTVYKVLA) is a DNA-binding region (H-T-H motif).

The protein belongs to the site-specific recombinase resolvase family.

Its function is as follows. Site-specific recombination protein. The protein is Resolvase/recombinase of Pseudomonas putida (Arthrobacter siderocapsulatus).